We begin with the raw amino-acid sequence, 348 residues long: MTVRIAINGFGRIGRNVVRALYESGRRAEITVVAINELADAAGMAHLLKYDTSHGRFAWEVRHEREQLFVGDDVIRILHERTLADLPWRELGVDVVLDCTGVYGNREHGEAHIAAGAKKVLFSHPGSNDLDATVVFGVNQNELRAEHRIVSNASCTTNCIIPVIKLLDDAYGIESGTVTTIHSAMNDQQVIDAYHSDLRRTRAASQSIIPVDTKLAAGITRIFPQFNDRFEAIAVRVPTINVTAIDLSVTVKKPVKASEVNQLLQKAAQGAFHGIVDYTESPLVSIDFNHDPHSAIVDGTQTRVSGAHLIKTLVWCDNEWGFANRMLDTTLAMAAVGFRLDASASTKL.

NAD(+)-binding positions include 12 to 13 (RI) and arginine 81. Substrate is bound by residues 154–156 (SCT), arginine 200, 213–214 (TK), and arginine 236. The active-site Nucleophile is cysteine 155. Asparagine 318 contacts NAD(+).

This sequence belongs to the glyceraldehyde-3-phosphate dehydrogenase family. Epd subfamily. As to quaternary structure, homotetramer.

The protein resides in the cytoplasm. The catalysed reaction is D-erythrose 4-phosphate + NAD(+) + H2O = 4-phospho-D-erythronate + NADH + 2 H(+). The protein operates within cofactor biosynthesis; pyridoxine 5'-phosphate biosynthesis; pyridoxine 5'-phosphate from D-erythrose 4-phosphate: step 1/5. Functionally, catalyzes the NAD-dependent conversion of D-erythrose 4-phosphate to 4-phosphoerythronate. This is D-erythrose-4-phosphate dehydrogenase from Salmonella dublin (strain CT_02021853).